The following is a 278-amino-acid chain: Probable endonuclease LCL3 (278 aa).

Residues phenylalanine 15 to tyrosine 37 form a helical membrane-spanning segment. A TNase-like domain is found at arginine 58 to glutamine 263. Residue arginine 154 is part of the active site. A Ca(2+)-binding site is contributed by aspartate 159. Residues glutamate 162 and arginine 202 contribute to the active site.

It belongs to the LCL3 family.

It is found in the mitochondrion. The protein resides in the membrane. This chain is Probable endonuclease LCL3 (LCL3), found in Vanderwaltozyma polyspora (strain ATCC 22028 / DSM 70294 / BCRC 21397 / CBS 2163 / NBRC 10782 / NRRL Y-8283 / UCD 57-17) (Kluyveromyces polysporus).